Reading from the N-terminus, the 162-residue chain is Zinc finger protein 593 homolog (162 aa).

A C2H2-type zinc finger spans residues 59 to 83; sequence FYCVHCAKYFIDDTAMQAHFRTKVH. The tract at residues 110 to 162 is disordered; that stretch reads VKPKKRAMETQPSKEDVVAGKRIRVEVVPEDTDATDSPSTSKTKRKKVEKMET. A compositionally biased stretch (basic and acidic residues) spans 115-136; sequence RAMETQPSKEDVVAGKRIRVEV. Positions 151-162 are enriched in basic residues; the sequence is KTKRKKVEKMET.

It belongs to the ZNF593/BUD20 C2H2-type zinc-finger protein family. As to quaternary structure, associates with pre-60S ribosomal particles; released from the pre-60S particle very early in the cytoplasm.

Its subcellular location is the nucleus. It is found in the cytoplasm. Functionally, involved in pre-60S ribosomal particles maturation by promoting the nuclear export of the 60S ribosome. The sequence is that of Zinc finger protein 593 homolog from Drosophila melanogaster (Fruit fly).